A 590-amino-acid polypeptide reads, in one-letter code: MSLPGGRGTVKIETRERIWVRRVNGETGVYDTRAGSFETVSCQEFEAAADTVPSVPVFCDRCFGTSLYEVPLTGFGTFVVGTCCIFSPGDPVDDPSIPAHMRKYQQPIEAHQTMVQVAPGTLKYSHQIPMGKVLGYWHVHMEDRVYLNMIGGIDESEDTGKRCVETFTEADIPCALSLGTLDVGLNEVILECSVVVIPARRGCHAKLFTRDTVSDGLEKFCFQSHATLPPTLLASFGSTSESPERKTFYEAHVDALNNYIKLLRTIYSHKGETEIEQYLIEGSKLYSELIGEPSRVLDATMKAAQIAEPQTHTGGADRQRPQRPDGIPYSVPDRFPMTGYPFAPQFCGDPGLVSHYNPFVPPQSFGQGYGPERVGGYYPQPPNPYVLPISYGQQPYPGHPQPHGHHQQRSGGGDLKAELIETLGLAPKTNAVQESLKSFISEILESELKNCGIKRAAGNIERNCDVDEEPPRTKRARPEPKTAVEAIVRAPYGDFDSTALTTKIGQVSDTVEKLNKVIETLLTQSSAQPAPLSTPAQAAPVQPSLPQPVPEPLAPQEPPPPGTSAPTLEASLPQQKPVVSKGAFETLMNL.

2 disordered regions span residues 306-329 and 528-590; these read IAEP…GIPY and QPAP…LMNL. Residues 543–563 show a composition bias toward pro residues; sequence PSLPQPVPEPLAPQEPPPPGT.

This is an uncharacterized protein from Ictaluridae (bullhead catfishes).